A 515-amino-acid polypeptide reads, in one-letter code: 1-pyrroline-5-carboxylate dehydrogenase (515 aa).

Catalysis depends on residues glutamate 286 and cysteine 320.

It belongs to the aldehyde dehydrogenase family. RocA subfamily.

It catalyses the reaction L-glutamate 5-semialdehyde + NAD(+) + H2O = L-glutamate + NADH + 2 H(+). Its pathway is amino-acid degradation; L-proline degradation into L-glutamate; L-glutamate from L-proline: step 2/2. The chain is 1-pyrroline-5-carboxylate dehydrogenase from Geobacillus kaustophilus (strain HTA426).